A 958-amino-acid chain; its full sequence is Transportin MOS14 (958 aa).

The region spanning 26-93 (ADRWLQNFQG…RQSLTTLLKK (68 aa)) is the Importin N-terminal domain.

This sequence belongs to the importin beta family. As to quaternary structure, interacts with RS2Z33, RSZ21, RS31A, SR34 and RAN1.

The protein localises to the nucleus. Its function is as follows. Functions as a nuclear import receptor for serine-arginine rich (SR) proteins. Regulates nuclear import of SR proteins that are required for proper splicing of the two resistance (R) genes SNC1 and RPS4, a crucial step for their functions in plant immunity. This is Transportin MOS14 from Arabidopsis thaliana (Mouse-ear cress).